Here is a 223-residue protein sequence, read N- to C-terminus: Uracil-DNA glycosylase (223 aa).

The Proton acceptor role is filled by Asp-66.

It belongs to the uracil-DNA glycosylase (UDG) superfamily. UNG family.

Its subcellular location is the cytoplasm. It carries out the reaction Hydrolyzes single-stranded DNA or mismatched double-stranded DNA and polynucleotides, releasing free uracil.. Its function is as follows. Excises uracil residues from the DNA which can arise as a result of misincorporation of dUMP residues by DNA polymerase or due to deamination of cytosine. The protein is Uracil-DNA glycosylase of Sulfurimonas denitrificans (strain ATCC 33889 / DSM 1251) (Thiomicrospira denitrificans (strain ATCC 33889 / DSM 1251)).